We begin with the raw amino-acid sequence, 463 residues long: Hexose-6-phosphate:phosphate antiporter (463 aa).

Topologically, residues 1-24 (MLAFLNQVRKPTLDLPLDVRRKMW) are cytoplasmic. A helical transmembrane segment spans residues 25–45 (FKPFMQSYLVVFIGYLTMYLI). At 46–60 (RKNFNIAQNDMISTY) the chain is on the periplasmic side. A helical transmembrane segment spans residues 61-81 (GLSMTELGMIGLGFSITYGVG). Topologically, residues 82–96 (KTLVSYYADGKNTKQ) are cytoplasmic. The chain crosses the membrane as a helical span at residues 97 to 117 (FLPFMLILSAICMLGFSASMG). The Periplasmic segment spans residues 118 to 122 (AGSTS). A helical transmembrane segment spans residues 123–143 (LFLMIAFYALSGFFQSTGGSC). Topologically, residues 144-159 (SYSTITKWTPRRKRGT) are cytoplasmic. A helical membrane pass occupies residues 160-180 (FLGFWNISHNLGGAGAAGVAL). At 181 to 189 (FGANYLFDG) the chain is on the periplasmic side. A helical membrane pass occupies residues 190–210 (HVIGMFIFPSIIALIVGFIGL). Residues 211-259 (RFGSDSPESYGLGKAEELFGEEISEEDKETEENEMTKWQIFVEYVLKNK) are Cytoplasmic-facing. The helical transmembrane segment at 260–280 (VIWLLCFSNIFLYVVRIGIDQ) threads the bilayer. Topologically, residues 281 to 297 (WSTVYAFQELKLSKEVA) are periplasmic. Residues 298-318 (IQGFTLFEVGALVGTLLWGWL) traverse the membrane as a helical segment. At 319–326 (SDLANGRR) the chain is on the cytoplasmic side. The chain crosses the membrane as a helical span at residues 327 to 347 (ALVACVALALIIATLGVYQHA). Topologically, residues 348 to 357 (SNQYVYLASL) are periplasmic. The helical transmembrane segment at 358–378 (FALGFLVFGPQLLIGVAAVGF) threads the bilayer. Topologically, residues 379–382 (VPKK) are cytoplasmic. Residues 383 to 403 (AIGAADGIKGTFAYLIGDSFA) traverse the membrane as a helical segment. The Periplasmic portion of the chain corresponds to 404–425 (KLGLGMIADGTPVFGLTGWAGT). The helical transmembrane segment at 426–446 (FAALDAAAIGCICLMAMVAVM) threads the bilayer. Residues 447 to 463 (EERKIRREKKIQQVNIA) lie on the Cytoplasmic side of the membrane.

The protein belongs to the major facilitator superfamily. Organophosphate:Pi antiporter (OPA) (TC 2.A.1.4) family.

The protein localises to the cell inner membrane. In terms of biological role, mediates the exchange of external hexose 6-phosphate and internal inorganic phosphate. This Salmonella typhimurium (strain LT2 / SGSC1412 / ATCC 700720) protein is Hexose-6-phosphate:phosphate antiporter (uhpT).